We begin with the raw amino-acid sequence, 316 residues long: Ribosomal RNA small subunit methyltransferase H (316 aa).

S-adenosyl-L-methionine contacts are provided by residues 35 to 37 (AGH), Asp55, Phe84, Asp105, and Gln112.

This sequence belongs to the methyltransferase superfamily. RsmH family.

It is found in the cytoplasm. It catalyses the reaction cytidine(1402) in 16S rRNA + S-adenosyl-L-methionine = N(4)-methylcytidine(1402) in 16S rRNA + S-adenosyl-L-homocysteine + H(+). Specifically methylates the N4 position of cytidine in position 1402 (C1402) of 16S rRNA. The sequence is that of Ribosomal RNA small subunit methyltransferase H from Streptococcus suis (strain 05ZYH33).